Consider the following 282-residue polypeptide: tRNA pseudouridine synthase B (282 aa).

The active-site Nucleophile is the aspartate 39.

The protein belongs to the pseudouridine synthase TruB family. Type 1 subfamily.

It catalyses the reaction uridine(55) in tRNA = pseudouridine(55) in tRNA. Responsible for synthesis of pseudouridine from uracil-55 in the psi GC loop of transfer RNAs. In Borreliella afzelii (strain PKo) (Borrelia afzelii), this protein is tRNA pseudouridine synthase B.